The sequence spans 104 residues: Replication restart protein PriB (104 aa).

In terms of domain architecture, SSB spans 1 to 101; it reads MTNRLVLSGT…LHAEQIELID (101 aa).

It belongs to the PriB family. As to quaternary structure, homodimer. Interacts with PriA and DnaT. Component of the replication restart primosome. Primosome assembly occurs via a 'hand-off' mechanism. PriA binds to replication forks, subsequently PriB then DnaT bind; DnaT then displaces ssDNA to generate the helicase loading substrate.

Involved in the restart of stalled replication forks, which reloads the replicative helicase on sites other than the origin of replication; the PriA-PriB pathway is the major replication restart pathway. During primosome assembly it facilitates complex formation between PriA and DnaT on DNA; stabilizes PriA on DNA. Stimulates the DNA unwinding activity of PriA helicase. This is Replication restart protein PriB from Escherichia coli (strain ATCC 8739 / DSM 1576 / NBRC 3972 / NCIMB 8545 / WDCM 00012 / Crooks).